A 232-amino-acid chain; its full sequence is Nucleoside diphosphate kinase 2, chloroplastic (232 aa).

The transit peptide at 1–79 directs the protein to the chloroplast; the sequence is MGCLSVVGAS…TRIFLPHLVA (79 aa). Lys-92, Phe-140, Arg-168, Thr-174, Arg-185, and Asn-195 together coordinate ATP. His-198 acts as the Pros-phosphohistidine intermediate in catalysis.

It belongs to the NDK family. It depends on Mg(2+) as a cofactor.

The protein localises to the plastid. It localises to the chloroplast. The enzyme catalyses a 2'-deoxyribonucleoside 5'-diphosphate + ATP = a 2'-deoxyribonucleoside 5'-triphosphate + ADP. It carries out the reaction a ribonucleoside 5'-diphosphate + ATP = a ribonucleoside 5'-triphosphate + ADP. Major role in the synthesis of nucleoside triphosphates other than ATP. The ATP gamma phosphate is transferred to the NDP beta phosphate via a ping-pong mechanism, using a phosphorylated active-site intermediate. The chain is Nucleoside diphosphate kinase 2, chloroplastic from Nicotiana tabacum (Common tobacco).